A 1094-amino-acid polypeptide reads, in one-letter code: Carbamoyl phosphate synthase large chain (1094 aa).

Positions 1–402 (MPRRSDLHRI…AFQKALRALE (402 aa)) are carboxyphosphate synthetic domain. The ATP site is built by arginine 129, arginine 169, glycine 175, glycine 176, arginine 208, leucine 210, glutamate 215, glycine 241, valine 242, histidine 243, glutamine 285, and glutamate 299. The ATP-grasp 1 domain occupies 133–328 (GEAMEKIGLR…IARIGAKLAV (196 aa)). Residues glutamine 285, glutamate 299, and asparagine 301 each coordinate Mg(2+). Positions 285, 299, and 301 each coordinate Mn(2+). Residues 403–552 (TGRSGWTIAE…YLYGNYDEES (150 aa)) are oligomerization domain. The interval 553-936 (EAATEGRKKV…AFMKSQLAAD (384 aa)) is carbamoyl phosphate synthetic domain. One can recognise an ATP-grasp 2 domain in the interval 679–870 (EAIARELGIE…LPSVAARLML (192 aa)). ATP-binding residues include arginine 715, arginine 754, leucine 756, glutamate 761, glycine 786, isoleucine 787, histidine 788, serine 789, glutamine 829, and glutamate 841. Mg(2+) is bound by residues glutamine 829, glutamate 841, and asparagine 843. The Mn(2+) site is built by glutamine 829, glutamate 841, and asparagine 843. The region spanning 937-1077 (NALPREGTVF…QEWHEILRAP (141 aa)) is the MGS-like domain. Residues 937-1094 (NALPREGTVF…AGSTQPAGVA (158 aa)) form an allosteric domain region.

The protein belongs to the CarB family. Composed of two chains; the small (or glutamine) chain promotes the hydrolysis of glutamine to ammonia, which is used by the large (or ammonia) chain to synthesize carbamoyl phosphate. Tetramer of heterodimers (alpha,beta)4. Mg(2+) is required as a cofactor. It depends on Mn(2+) as a cofactor.

The enzyme catalyses hydrogencarbonate + L-glutamine + 2 ATP + H2O = carbamoyl phosphate + L-glutamate + 2 ADP + phosphate + 2 H(+). It catalyses the reaction hydrogencarbonate + NH4(+) + 2 ATP = carbamoyl phosphate + 2 ADP + phosphate + 2 H(+). The protein operates within amino-acid biosynthesis; L-arginine biosynthesis; carbamoyl phosphate from bicarbonate: step 1/1. It participates in pyrimidine metabolism; UMP biosynthesis via de novo pathway; (S)-dihydroorotate from bicarbonate: step 1/3. Large subunit of the glutamine-dependent carbamoyl phosphate synthetase (CPSase). CPSase catalyzes the formation of carbamoyl phosphate from the ammonia moiety of glutamine, carbonate, and phosphate donated by ATP, constituting the first step of 2 biosynthetic pathways, one leading to arginine and/or urea and the other to pyrimidine nucleotides. The large subunit (synthetase) binds the substrates ammonia (free or transferred from glutamine from the small subunit), hydrogencarbonate and ATP and carries out an ATP-coupled ligase reaction, activating hydrogencarbonate by forming carboxy phosphate which reacts with ammonia to form carbamoyl phosphate. In Gemmatimonas aurantiaca (strain DSM 14586 / JCM 11422 / NBRC 100505 / T-27), this protein is Carbamoyl phosphate synthase large chain.